Reading from the N-terminus, the 204-residue chain is Phosphopantothenoylcysteine decarboxylase (204 aa).

Residues Phe59 and Asp104–Thr107 contribute to the FMN site. Asn140 serves as a coordination point for substrate. Catalysis depends on Cys173, which acts as the Proton donor.

It belongs to the HFCD (homooligomeric flavin containing Cys decarboxylase) superfamily. Homotrimer. It depends on FMN as a cofactor.

It catalyses the reaction N-[(R)-4-phosphopantothenoyl]-L-cysteine + H(+) = (R)-4'-phosphopantetheine + CO2. It participates in cofactor biosynthesis; coenzyme A biosynthesis; CoA from (R)-pantothenate: step 3/5. Catalyzes the decarboxylation of the cysteine moiety of 4-phosphopantothenoylcysteine to form 4'-phosphopantotheine and this reaction forms part of the biosynthesis of coenzyme A. This Homo sapiens (Human) protein is Phosphopantothenoylcysteine decarboxylase (PPCDC).